Reading from the N-terminus, the 163-residue chain is MSNINLATLDISEHPNLPTSSAVLFKAKDDKKLSFEKIASHVGRNEVATAAIFYGQAKASAEDIVRLAEVLGIDHGQLAFLLGGFPDRGKSVPFPPKDPLIYRLYEIVQNYGYAYKAVMNEKFGDGIMSAISFSTKVEKETDKDGNDWAVVTWRGKWLPYSRF.

Active-site residues include Arg-103, Glu-106, and Ser-129.

Belongs to the cyanase family.

The enzyme catalyses cyanate + hydrogencarbonate + 3 H(+) = NH4(+) + 2 CO2. Functionally, catalyzes the reaction of cyanate with bicarbonate to produce ammonia and carbon dioxide. This Ajellomyces capsulatus (strain H143) (Darling's disease fungus) protein is Cyanate hydratase.